We begin with the raw amino-acid sequence, 363 residues long: Protein RecA (363 aa).

Residue 79 to 86 coordinates ATP; that stretch reads GPESSGKT.

The protein belongs to the RecA family.

The protein localises to the cytoplasm. Can catalyze the hydrolysis of ATP in the presence of single-stranded DNA, the ATP-dependent uptake of single-stranded DNA by duplex DNA, and the ATP-dependent hybridization of homologous single-stranded DNAs. It interacts with LexA causing its activation and leading to its autocatalytic cleavage. This Methylobacterium radiotolerans (strain ATCC 27329 / DSM 1819 / JCM 2831 / NBRC 15690 / NCIMB 10815 / 0-1) protein is Protein RecA.